Consider the following 261-residue polypeptide: Leucine-rich repeat-containing protein 61 (261 aa).

LRR repeat units lie at residues Gly54–Arg75, Gln76–Glu97, and Asn98–Ala119. The region spanning Asn138–Leu183 is the LRRCT domain.

The sequence is that of Leucine-rich repeat-containing protein 61 (LRRC61) from Bos taurus (Bovine).